The chain runs to 223 residues: MHQRLATLAAARLYLCTDARRERGDLAEFADAALAGGVDVIQLRDKGSPGEQRFGPLEARDELAACEILADAARRHGALFAVNDRADIARAAGADVLHLGQGDLPLEVARAFVGPDVLLGLSSHDRDQMAAAAAGPADYFCVGPCWPTPTKPGRAAPGLALVRAAAELHTGKPWFAIGGIDAQRLPEVLDAGARRVVVVRAITAADDPAAAARRLSSALAAAR.

Residues 42–46 and asparagine 83 contribute to the 4-amino-2-methyl-5-(diphosphooxymethyl)pyrimidine site; that span reads QLRDK. Residues aspartate 84 and aspartate 103 each contribute to the Mg(2+) site. Residue serine 122 coordinates 4-amino-2-methyl-5-(diphosphooxymethyl)pyrimidine. 148 to 150 is a binding site for 2-[(2R,5Z)-2-carboxy-4-methylthiazol-5(2H)-ylidene]ethyl phosphate; sequence TPT. Lysine 151 serves as a coordination point for 4-amino-2-methyl-5-(diphosphooxymethyl)pyrimidine. Glycine 179 provides a ligand contact to 2-[(2R,5Z)-2-carboxy-4-methylthiazol-5(2H)-ylidene]ethyl phosphate.

Belongs to the thiamine-phosphate synthase family. It depends on Mg(2+) as a cofactor.

The enzyme catalyses 2-[(2R,5Z)-2-carboxy-4-methylthiazol-5(2H)-ylidene]ethyl phosphate + 4-amino-2-methyl-5-(diphosphooxymethyl)pyrimidine + 2 H(+) = thiamine phosphate + CO2 + diphosphate. It catalyses the reaction 2-(2-carboxy-4-methylthiazol-5-yl)ethyl phosphate + 4-amino-2-methyl-5-(diphosphooxymethyl)pyrimidine + 2 H(+) = thiamine phosphate + CO2 + diphosphate. The catalysed reaction is 4-methyl-5-(2-phosphooxyethyl)-thiazole + 4-amino-2-methyl-5-(diphosphooxymethyl)pyrimidine + H(+) = thiamine phosphate + diphosphate. Its pathway is cofactor biosynthesis; thiamine diphosphate biosynthesis; thiamine phosphate from 4-amino-2-methyl-5-diphosphomethylpyrimidine and 4-methyl-5-(2-phosphoethyl)-thiazole: step 1/1. In terms of biological role, condenses 4-methyl-5-(beta-hydroxyethyl)thiazole monophosphate (THZ-P) and 2-methyl-4-amino-5-hydroxymethyl pyrimidine pyrophosphate (HMP-PP) to form thiamine monophosphate (TMP). The protein is Thiamine-phosphate synthase of Mycolicibacterium paratuberculosis (strain ATCC BAA-968 / K-10) (Mycobacterium paratuberculosis).